A 462-amino-acid polypeptide reads, in one-letter code: Protein phosphatase 1M (462 aa).

Residues 1-10 (MSAGWFRRRF) are compositionally biased toward basic residues. The segment at 1 to 66 (MSAGWFRRRF…PVRSPARGRT (66 aa)) is disordered. The PPM-type phosphatase domain maps to 100–452 (EFGIEEDQEW…DDVSVFVIPL (353 aa)). Mn(2+)-binding residues include Asp127 and Gly128.

It belongs to the PP2C family. Mg(2+) is required as a cofactor. It depends on Mn(2+) as a cofactor. In terms of tissue distribution, widely expressed with highest levels in testis and lower levels in lung, kidney and brain.

The protein localises to the nucleus. The enzyme catalyses O-phospho-L-seryl-[protein] + H2O = L-seryl-[protein] + phosphate. The catalysed reaction is O-phospho-L-threonyl-[protein] + H2O = L-threonyl-[protein] + phosphate. The polypeptide is Protein phosphatase 1M (Mus musculus (Mouse)).